We begin with the raw amino-acid sequence, 952 residues long: Alpha-L-rhamnosidase (952 aa).

A signal peptide spans Met1–Lys21. Residues Asp520, Arg524–Glu525, Asp532, and Trp594 each bind alpha-L-rhamnose. Glu525 functions as the Proton donor in the catalytic mechanism. Residue Glu809 is the Proton acceptor of the active site. Position 826 (His826) interacts with alpha-L-rhamnose.

It belongs to the glycosyl hydrolase 78 family.

It localises to the cell membrane. The enzyme catalyses Hydrolysis of terminal non-reducing alpha-L-rhamnose residues in alpha-L-rhamnosides.. In terms of biological role, alpha-L-rhamnosidase that may be involved in ulvan degradation. Ulvan is the main polysaccharide component of the Ulvales (green seaweed) cell wall. It is composed of disaccharide building blocks comprising 3-sulfated rhamnose (Rha3S) linked to D-glucuronic acid (GlcA), L-iduronic acid (IduA), or D-xylose (Xyl). The protein is Alpha-L-rhamnosidase of Formosa agariphila (strain DSM 15362 / KCTC 12365 / LMG 23005 / KMM 3901 / M-2Alg 35-1).